Here is a 66-residue protein sequence, read N- to C-terminus: Large ribosomal subunit protein uL29 (66 aa).

Belongs to the universal ribosomal protein uL29 family.

The polypeptide is Large ribosomal subunit protein uL29 (Borrelia garinii subsp. bavariensis (strain ATCC BAA-2496 / DSM 23469 / PBi) (Borreliella bavariensis)).